Consider the following 124-residue polypeptide: Fluoride-specific ion channel FluC (124 aa).

The next 4 helical transmembrane spans lie at 1–21 (MLNTLVVFLGAGLGGALRYGV), 36–56 (TMIINVSGSLAMGILAGWFVV), 70–90 (TGILGGFTTFSTFSLEAFLLI), and 100–120 (LYVIGSVAAGIAGVAVSFAII). Residues glycine 74 and threonine 77 each contribute to the Na(+) site.

Belongs to the fluoride channel Fluc/FEX (TC 1.A.43) family.

The protein resides in the cell inner membrane. It catalyses the reaction fluoride(in) = fluoride(out). Its activity is regulated as follows. Na(+) is not transported, but it plays an essential structural role and its presence is essential for fluoride channel function. Its function is as follows. Fluoride-specific ion channel. Important for reducing fluoride concentration in the cell, thus reducing its toxicity. The chain is Fluoride-specific ion channel FluC from Methylobacterium sp. (strain 4-46).